We begin with the raw amino-acid sequence, 120 residues long: uncharacterized protein (120 aa).

The N-terminal stretch at 1–16 (MFKFILLCFCINFAFS) is a signal peptide.

This is an uncharacterized protein from Acheta domesticus (House cricket).